Here is a 210-residue protein sequence, read N- to C-terminus: Menaquinone reductase, multiheme cytochrome c subunit (210 aa).

Residues glycine 20 to phenylalanine 40 traverse the membrane as a helical segment. Residues cysteine 67, cysteine 70, histidine 71, cysteine 88, cysteine 91, histidine 92, cysteine 140, cysteine 143, histidine 144, cysteine 152, cysteine 155, histidine 156, cysteine 186, cysteine 189, histidine 190, cysteine 205, cysteine 208, and histidine 209 each contribute to the heme site.

The protein belongs to the multiheme cytochrome c family. The Qrc complex is composed of four subunits: QrcA, QrcB, QrcC and QrcD. Can form a supercomplex with the [NiFe] hydrogenase HynA1 and the tetraheme Type I cytochrome c3 TpIc(3), its physiological electron donors. The cofactor is heme c.

The protein resides in the cell inner membrane. In terms of biological role, component of the respiratory Qrc complex, that catalyzes the reduction of the menaquinone pool using electrons transferred from the reduced periplasmic cytochrome c3, and which is probably involved in sulfate respiration. Is likely essential for growth on H(2) or formate since the periplasmic hydrogenases and/or formate dehydrogenases act as primary electron donors for the Qrc complex. The protein is Menaquinone reductase, multiheme cytochrome c subunit of Nitratidesulfovibrio vulgaris (strain ATCC 29579 / DSM 644 / CCUG 34227 / NCIMB 8303 / VKM B-1760 / Hildenborough) (Desulfovibrio vulgaris).